A 311-amino-acid polypeptide reads, in one-letter code: MEMAAPNGGGAAGMSSPVNGASAPATPGTPAPLFAGPRVDSLSYERKSMPRCKCLPAAVAEAWAPSAHGCVVEIPAPDVSLTRKLGAEFVGTFILIFFATAAPIVNQKYGGAISPFGNAACAGLAVTTIILSTGHISGAHLNPSLTIAFAALRHFPWLQVPAYVAVQVLGSICAGFALKGVFHPFLSGGVTVPDPTISTAQAFFTEFIITFNLLFVVTAVATDTRAVGELAGIAVGAAVTLNILIAGPTTGGSMNPVRTLGPAVAAGNYRQLWIYLIAPTLGAVAGAGVYTAVKLRDENGETPRPQRSFRR.

Residues 1-34 (MEMAAPNGGGAAGMSSPVNGASAPATPGTPAPLF) form a disordered region. Residues 20–34 (GASAPATPGTPAPLF) show a composition bias toward low complexity. Helical transmembrane passes span 85–105 (LGAE…APIV) and 111–131 (GAIS…TIIL). An NPA 1 motif is present at residues 142–144 (NPS). 3 consecutive transmembrane segments (helical) span residues 158-178 (LQVP…GFAL), 202-222 (AFFT…AVAT), and 226-246 (AVGE…ILIA). Positions 255–257 (NPV) match the NPA 2 motif. A helical membrane pass occupies residues 273–293 (WIYLIAPTLGAVAGAGVYTAV).

This sequence belongs to the MIP/aquaporin (TC 1.A.8) family. NIP (TC 1.A.8.12) subfamily. Expressed in roots and leaves.

Its subcellular location is the membrane. In terms of biological role, aquaporins facilitate the transport of water and small neutral solutes across cell membranes. The polypeptide is Aquaporin NIP3-1 (NIP3-1) (Oryza sativa subsp. japonica (Rice)).